Here is a 207-residue protein sequence, read N- to C-terminus: Guanylate kinase (207 aa).

The region spanning 6–185 is the Guanylate kinase-like domain; the sequence is GLLIVLSGPS…AKNRIQCIVE (180 aa). 13 to 20 lines the ATP pocket; sequence GPSGVGKG.

The protein belongs to the guanylate kinase family.

The protein resides in the cytoplasm. The catalysed reaction is GMP + ATP = GDP + ADP. In terms of biological role, essential for recycling GMP and indirectly, cGMP. This Staphylococcus aureus (strain Mu50 / ATCC 700699) protein is Guanylate kinase.